Reading from the N-terminus, the 256-residue chain is MAVGKNKRLSKGKKGLKKKTVDPFTRKDWYSIKAPNPFNVRDVGKTLVNRTTGLKNANDALKGRIVEVSLADLQKDEDHAFRKVRLRVDEVQGKNCLTNFHGLDFTSDKLRSLVRKWQTLIEANVTVKTTDDYLIRLFAIAFTKRRPNQIKKTTYAASSQIRAIRRKMTDIIQREASSCTLTQLTSKLIPEVIGREIEKSTQGIYPLQNVHIRKVKLLKSPKFDLGALMALHGESGTDDQGQKVEREFKERVLEEV.

The residue at position 2 (alanine 2) is an N-acetylalanine; partial.

Belongs to the eukaryotic ribosomal protein eS1 family. In terms of assembly, component of the small ribosomal subunit. Mature ribosomes consist of a small (40S) and a large (60S) subunit. The 40S subunit contains about 33 different proteins and 1 molecule of RNA (18S). The 60S subunit contains about 49 different proteins and 3 molecules of RNA (25S, 5.8S and 5S).

The protein localises to the cytoplasm. The protein is Small ribosomal subunit protein eS1 of Fusarium vanettenii (strain ATCC MYA-4622 / CBS 123669 / FGSC 9596 / NRRL 45880 / 77-13-4) (Fusarium solani subsp. pisi).